Reading from the N-terminus, the 620-residue chain is Tyrosine-protein kinase ITK/TSK (620 aa).

Residues 4–111 (FILLEEQLIK…WVLALKEETR (108 aa)) enclose the PH domain. Residues 113–149 (NNSLVPKYHPNFWMDGKWRCCSQLEKLATGCAQYDPT) form a Btk-type zinc finger. Positions 121, 132, 133, and 143 each coordinate Zn(2+). One can recognise an SH3 domain in the interval 171 to 231 (PEETVVIALY…PSSYLVEKSP (61 aa)). Y180 carries the phosphotyrosine; by autocatalysis modification. The 100-residue stretch at 239 to 338 (WYNKSISRDK…GLVTRLRYPV (100 aa)) folds into the SH2 domain. The Protein kinase domain occupies 363 to 615 (LTFVQEIGSG…SRLLRQLAEI (253 aa)). ATP-binding positions include 369–377 (IGSGQFGLV) and K391. Residue D482 is the Proton acceptor of the active site. At Y512 the chain carries Phosphotyrosine; by LCK. S565 carries the phosphoserine modification.

This sequence belongs to the protein kinase superfamily. Tyr protein kinase family. TEC subfamily. Homooligomerizes; this association negatively regulates kinase activity. Interacts with PPIA/CYPA; this interaction regulates TCR signal strength via a proline-directed conformational switch in ITK. Interacts with THEMIS. Interacts with FASLG. Interacts with VAV1; this interaction is important for VAV1 localization and TCR-induced actin polarization. Interacts with TBX21. The cofactor is Zn(2+). Phosphorylated at Tyr-512 in the activation loop of the kinase domain by LCK. Subsequent autophosphorylation at Tyr-180 leads to the kinase activation. The autophosphorylated Tyr-180 lies within the substrate binding sequence of the SH3 domain. In terms of processing, ubiquitinated. T-cell lines and natural killer cell lines.

The protein localises to the cytoplasm. It localises to the nucleus. The enzyme catalyses L-tyrosyl-[protein] + ATP = O-phospho-L-tyrosyl-[protein] + ADP + H(+). Its function is as follows. Tyrosine kinase that plays an essential role in regulation of the adaptive immune response. Regulates the development, function and differentiation of conventional T-cells and nonconventional NKT-cells. When antigen presenting cells (APC) activate T-cell receptor (TCR), a series of phosphorylation lead to the recruitment of ITK to the cell membrane, in the vicinity of the stimulated TCR receptor, where it is phosphorylated by LCK. Phosphorylation leads to ITK autophosphorylation and full activation. Once activated, phosphorylates PLCG1, leading to the activation of this lipase and subsequent cleavage of its substrates. In turn, the endoplasmic reticulum releases calcium in the cytoplasm and the nuclear activator of activated T-cells (NFAT) translocates into the nucleus to perform its transcriptional duty. Phosphorylates 2 essential adapter proteins: the linker for activation of T-cells/LAT protein and LCP2. Then, a large number of signaling molecules such as VAV1 are recruited and ultimately lead to lymphokine production, T-cell proliferation and differentiation. Required for TCR-mediated calcium response in gamma-delta T-cells, may also be involved in the modulation of the transcriptomic signature in the Vgamma2-positive subset of immature gamma-delta T-cells. Phosphorylates TBX21 at 'Tyr-530' and mediates its interaction with GATA3. This Homo sapiens (Human) protein is Tyrosine-protein kinase ITK/TSK (ITK).